Here is a 297-residue protein sequence, read N- to C-terminus: Phosphoribosylaminoimidazole-succinocarboxamide synthase (297 aa).

Belongs to the SAICAR synthetase family.

The enzyme catalyses 5-amino-1-(5-phospho-D-ribosyl)imidazole-4-carboxylate + L-aspartate + ATP = (2S)-2-[5-amino-1-(5-phospho-beta-D-ribosyl)imidazole-4-carboxamido]succinate + ADP + phosphate + 2 H(+). The protein operates within purine metabolism; IMP biosynthesis via de novo pathway; 5-amino-1-(5-phospho-D-ribosyl)imidazole-4-carboxamide from 5-amino-1-(5-phospho-D-ribosyl)imidazole-4-carboxylate: step 1/2. The sequence is that of Phosphoribosylaminoimidazole-succinocarboxamide synthase from Saccharopolyspora erythraea (strain ATCC 11635 / DSM 40517 / JCM 4748 / NBRC 13426 / NCIMB 8594 / NRRL 2338).